Consider the following 79-residue polypeptide: Small ribosomal subunit protein bS18 (79 aa).

This sequence belongs to the bacterial ribosomal protein bS18 family. Part of the 30S ribosomal subunit. Forms a tight heterodimer with protein bS6.

Binds as a heterodimer with protein bS6 to the central domain of the 16S rRNA, where it helps stabilize the platform of the 30S subunit. In Bacillus velezensis (strain DSM 23117 / BGSC 10A6 / LMG 26770 / FZB42) (Bacillus amyloliquefaciens subsp. plantarum), this protein is Small ribosomal subunit protein bS18.